We begin with the raw amino-acid sequence, 311 residues long: Cytosolic Fe-S cluster assembly factor Nubp1 homolog (311 aa).

The disordered stretch occupies residues 1–21 (MQAPPPEHCPGVESEEAGKGS). [4Fe-4S] cluster contacts are provided by C9, C23, C26, and C32. 63-70 (GKGGVGKS) serves as a coordination point for ATP. [4Fe-4S] cluster-binding residues include C240 and C243.

The protein belongs to the Mrp/NBP35 ATP-binding proteins family. NUBP1/NBP35 subfamily. As to quaternary structure, heterotetramer of 2 Nubp1 and 2 Nubp2 chains. [4Fe-4S] cluster serves as cofactor.

It is found in the cytoplasm. Component of the cytosolic iron-sulfur (Fe/S) protein assembly (CIA) machinery. Required for maturation of extramitochondrial Fe-S proteins. The Nubp1-Nubp2 heterotetramer forms a Fe-S scaffold complex, mediating the de novo assembly of an Fe-S cluster and its transfer to target apoproteins. This Drosophila melanogaster (Fruit fly) protein is Cytosolic Fe-S cluster assembly factor Nubp1 homolog.